A 346-amino-acid chain; its full sequence is Phosphoribosylformylglycinamidine cyclo-ligase (346 aa).

This sequence belongs to the AIR synthase family.

Its subcellular location is the cytoplasm. The catalysed reaction is 2-formamido-N(1)-(5-O-phospho-beta-D-ribosyl)acetamidine + ATP = 5-amino-1-(5-phospho-beta-D-ribosyl)imidazole + ADP + phosphate + H(+). It functions in the pathway purine metabolism; IMP biosynthesis via de novo pathway; 5-amino-1-(5-phospho-D-ribosyl)imidazole from N(2)-formyl-N(1)-(5-phospho-D-ribosyl)glycinamide: step 2/2. The protein is Phosphoribosylformylglycinamidine cyclo-ligase of Bacillus mycoides (strain KBAB4) (Bacillus weihenstephanensis).